Reading from the N-terminus, the 482-residue chain is Cardiolipin synthase (482 aa).

2 helical membrane-spanning segments follow: residues 4-24 (LAYL…VTVF) and 34-54 (WAWL…YLIF). 2 consecutive PLD phosphodiesterase domains span residues 217-244 (LNYR…GDEY) and 395-422 (DNGF…DFRS). Residues histidine 222, lysine 224, aspartate 229, histidine 400, lysine 402, and aspartate 407 contribute to the active site.

The protein belongs to the phospholipase D family. Cardiolipin synthase subfamily.

The protein resides in the cell membrane. It catalyses the reaction 2 a 1,2-diacyl-sn-glycero-3-phospho-(1'-sn-glycerol) = a cardiolipin + glycerol. Catalyzes the reversible phosphatidyl group transfer from one phosphatidylglycerol molecule to another to form cardiolipin (CL) (diphosphatidylglycerol) and glycerol. The protein is Cardiolipin synthase (cls) of Listeria monocytogenes serotype 4a (strain HCC23).